The primary structure comprises 243 residues: Uridylate kinase (243 aa).

15-18 provides a ligand contact to ATP; the sequence is KLSG. Glycine 56 lines the UMP pocket. 2 residues coordinate ATP: glycine 57 and arginine 61. 138-145 is a UMP binding site; that stretch reads TGNPYFST. Asparagine 166, tyrosine 172, and aspartate 175 together coordinate ATP.

Belongs to the UMP kinase family. Homohexamer.

It is found in the cytoplasm. The enzyme catalyses UMP + ATP = UDP + ADP. Its pathway is pyrimidine metabolism; CTP biosynthesis via de novo pathway; UDP from UMP (UMPK route): step 1/1. Inhibited by UTP. Its function is as follows. Catalyzes the reversible phosphorylation of UMP to UDP. The protein is Uridylate kinase of Mycoplasma genitalium (strain ATCC 33530 / DSM 19775 / NCTC 10195 / G37) (Mycoplasmoides genitalium).